A 314-amino-acid chain; its full sequence is MQKSTSKYVIDPISIKTNCSSEESYIRCVEYGKGKAHYRNLILLAKAILAGVFVGVCAHASGIAGGLFYYHKLREYVGISMSAFVYGFTFPIAFLCIICTGSDLFTGNTLAVTTALLQKKLGLLCYMRVMCISLVGNYIGAVAFAFFVSYGSGAFSINTDTSKNHIFQFLNDIAIKKVSHSFIECICLAIGCNIFVCLAVYFVLSIKDGSGLVFSVFFAVYAFAIAGYEHIIANIYTLNLALMISNDISFTQVYFKNLLPTLIGNYIAGGLVLAFPLFFIYRSCYYDYDKMNDELNTVVLKTLSLELQNESNHI.

Topologically, residues 1–47 (MQKSTSKYVIDPISIKTNCSSEESYIRCVEYGKGKAHYRNLILLAKA) are cytoplasmic. A helical transmembrane segment spans residues 48–68 (ILAGVFVGVCAHASGIAGGLF). Residues 69 to 77 (YYHKLREYV) are Extracellular-facing. A helical transmembrane segment spans residues 78–98 (GISMSAFVYGFTFPIAFLCII). Topologically, residues 99–128 (CTGSDLFTGNTLAVTTALLQKKLGLLCYMR) are cytoplasmic. Residues 129 to 149 (VMCISLVGNYIGAVAFAFFVS) form a helical membrane-spanning segment. Over 150–185 (YGSGAFSINTDTSKNHIFQFLNDIAIKKVSHSFIEC) the chain is Extracellular. The helical transmembrane segment at 186 to 206 (ICLAIGCNIFVCLAVYFVLSI) threads the bilayer. Residues 207 to 211 (KDGSG) are Cytoplasmic-facing. The chain crosses the membrane as a helical span at residues 212–232 (LVFSVFFAVYAFAIAGYEHII). Topologically, residues 233-260 (ANIYTLNLALMISNDISFTQVYFKNLLP) are extracellular. Residues 261 to 281 (TLIGNYIAGGLVLAFPLFFIY) form a helical membrane-spanning segment. Over 282–314 (RSCYYDYDKMNDELNTVVLKTLSLELQNESNHI) the chain is Cytoplasmic.

Belongs to the FNT transporter (TC 1.A.16) family. In terms of assembly, homopentamer.

The protein localises to the cell membrane. The protein resides in the vacuole membrane. It carries out the reaction (S)-lactate(in) + H(+)(in) = (S)-lactate(out) + H(+)(out). It catalyses the reaction formate(in) + H(+)(in) = formate(out) + H(+)(out). The catalysed reaction is pyruvate(out) + H(+)(out) = pyruvate(in) + H(+)(in). The enzyme catalyses acetate(out) + H(+)(out) = acetate(in) + H(+)(in). With respect to regulation, inhibited by the Malaria Box compound MMV007839 and its derivatives BH296 and BH267.meta. Functionally, monocarboxylate-proton symporter that mediates the efflux of the waste product lactate in the intraerythrocytic parasites; active in acidic-to-neutral pH range. Transports L-lactate. The chain is Formate-nitrite transporter from Plasmodium malariae.